We begin with the raw amino-acid sequence, 368 residues long: Putative glutamate--cysteine ligase 2 (368 aa).

This sequence belongs to the glutamate--cysteine ligase type 2 family. YbdK subfamily.

It catalyses the reaction L-cysteine + L-glutamate + ATP = gamma-L-glutamyl-L-cysteine + ADP + phosphate + H(+). In terms of biological role, ATP-dependent carboxylate-amine ligase which exhibits weak glutamate--cysteine ligase activity. This chain is Putative glutamate--cysteine ligase 2, found in Pseudomonas putida (strain ATCC 47054 / DSM 6125 / CFBP 8728 / NCIMB 11950 / KT2440).